A 403-amino-acid polypeptide reads, in one-letter code: Phosphoglycerate kinase (403 aa).

Substrate is bound by residues 22–24 (DLN), arginine 37, 60–63 (HLGN), arginine 119, and arginine 152. Residues lysine 202, glutamate 325, and 355 to 358 (GGDT) contribute to the ATP site.

It belongs to the phosphoglycerate kinase family. In terms of assembly, monomer.

Its subcellular location is the cytoplasm. It catalyses the reaction (2R)-3-phosphoglycerate + ATP = (2R)-3-phospho-glyceroyl phosphate + ADP. It functions in the pathway carbohydrate degradation; glycolysis; pyruvate from D-glyceraldehyde 3-phosphate: step 2/5. The polypeptide is Phosphoglycerate kinase (Orientia tsutsugamushi (strain Boryong) (Rickettsia tsutsugamushi)).